Consider the following 37-residue polypeptide: NAD-reducing hydrogenase HoxS subunit alpha (37 aa).

It belongs to the complex I 51 kDa subunit family. In terms of assembly, tetramer of an alpha and a gamma subunits (flavin-containing dimer), and a delta and a nickel-containing beta subunits (hydrogenase dimer). FMN serves as cofactor. Requires [4Fe-4S] cluster as cofactor.

It localises to the cytoplasm. It catalyses the reaction H2 + NAD(+) = NADH + H(+). Its function is as follows. Subunits alpha and gamma of HoxS constitute an NADH--oxidoreductase. This Rhodococcus opacus (Nocardia opaca) protein is NAD-reducing hydrogenase HoxS subunit alpha (hoxF).